The primary structure comprises 646 residues: Peptidylprolyl isomerase domain and WD repeat-containing protein 1 (646 aa).

The tract at residues 1-30 (MAAESGSDFQQRRRRRRDPEEPEKTELSER) is disordered. At Ala-2 the chain carries N-acetylalanine. Residues 17-30 (RDPEEPEKTELSER) are compositionally biased toward basic and acidic residues. WD repeat units lie at residues 88 to 126 (MHRD…IEFV), 131 to 170 (SHLG…MINM), 221 to 260 (LHTS…YKFP), and 278 to 319 (KCKA…RVFD). The span at 455–478 (EPEDTKSADSDRDVFNEKPSKEEV) shows a compositional bias: basic and acidic residues. Residues 455 to 490 (EPEDTKSADSDRDVFNEKPSKEEVMAATQAEGPKRV) form a disordered region. In terms of domain architecture, PPIase cyclophilin-type spans 490 to 645 (VSDSAIIHTS…EDVSIINITV (156 aa)).

This sequence belongs to the cyclophilin-type PPIase family. PPIL1 subfamily. In terms of assembly, identified in the spliceosome C complex.

It localises to the nucleus. It catalyses the reaction [protein]-peptidylproline (omega=180) = [protein]-peptidylproline (omega=0). Inhibited by cyclosporin A (CsA). In terms of biological role, PPIase that catalyzes the cis-trans isomerization of proline imidic peptide bonds in oligopeptides and may therefore assist protein folding. May be involved in pre-mRNA splicing. The protein is Peptidylprolyl isomerase domain and WD repeat-containing protein 1 of Pongo abelii (Sumatran orangutan).